Here is a 269-residue protein sequence, read N- to C-terminus: 4-hydroxy-tetrahydrodipicolinate reductase (269 aa).

Residues 9 to 14 (GAGGRM) and glutamate 35 each bind NAD(+). NADP(+) is bound at residue arginine 36. Residues 98 to 100 (GTT) and 122 to 125 (ASNY) contribute to the NAD(+) site. Residue histidine 155 is the Proton donor/acceptor of the active site. Residue histidine 156 participates in (S)-2,3,4,5-tetrahydrodipicolinate binding. The active-site Proton donor is lysine 159. A (S)-2,3,4,5-tetrahydrodipicolinate-binding site is contributed by 165-166 (GT).

This sequence belongs to the DapB family.

It localises to the cytoplasm. The catalysed reaction is (S)-2,3,4,5-tetrahydrodipicolinate + NAD(+) + H2O = (2S,4S)-4-hydroxy-2,3,4,5-tetrahydrodipicolinate + NADH + H(+). It catalyses the reaction (S)-2,3,4,5-tetrahydrodipicolinate + NADP(+) + H2O = (2S,4S)-4-hydroxy-2,3,4,5-tetrahydrodipicolinate + NADPH + H(+). It functions in the pathway amino-acid biosynthesis; L-lysine biosynthesis via DAP pathway; (S)-tetrahydrodipicolinate from L-aspartate: step 4/4. Catalyzes the conversion of 4-hydroxy-tetrahydrodipicolinate (HTPA) to tetrahydrodipicolinate. This chain is 4-hydroxy-tetrahydrodipicolinate reductase, found in Actinobacillus pleuropneumoniae serotype 7 (strain AP76).